A 117-amino-acid polypeptide reads, in one-letter code: Immunoglobulin heavy variable 1-84 (117 aa).

An N-terminal signal peptide occupies residues 1 to 19 (MGWSWIFLFLLSGTAGVHC). The interval 20–49 (QIQLQQSGPELVKPGASVKISCKASGYTFT) is framework-1. The Ig-like domain maps to 31–117 (VKPGASVKIS…EDSAVYFCAR (87 aa)). The cysteines at positions 41 and 115 are disulfide-linked. The segment at 50–54 (DYYIN) is complementarity-determining-1. Positions 55–68 (WVKQRPGQGLEWIG) are framework-2. A complementarity-determining-2 region spans residues 69–85 (WIYPGSGNTKYNEKFKG). A framework-3 region spans residues 86 to 117 (KATLTVDTSSSTAYMQLSSLTSEDSAVYFCAR).

This is Immunoglobulin heavy variable 1-84 from Mus musculus (Mouse).